Here is a 179-residue protein sequence, read N- to C-terminus: Ribulose bisphosphate carboxylase small subunit, chloroplastic 1/4 (179 aa).

A chloroplast-targeting transit peptide spans methionine 1 to glutamine 58.

Belongs to the RuBisCO small chain family. Heterohexadecamer of 8 large and 8 small subunits.

The protein resides in the plastid. Its subcellular location is the chloroplast. Functionally, ruBisCO catalyzes two reactions: the carboxylation of D-ribulose 1,5-bisphosphate, the primary event in carbon dioxide fixation, as well as the oxidative fragmentation of the pentose substrate. Both reactions occur simultaneously and in competition at the same active site. Although the small subunit is not catalytic it is essential for maximal activity. This is Ribulose bisphosphate carboxylase small subunit, chloroplastic 1/4 (RBCS1) from Fritillaria agrestis (Stinkbells).